The sequence spans 406 residues: Phosphopentomutase (406 aa).

Residues Asp10, Asp305, His310, Asp346, His347, and His358 each coordinate Mn(2+).

Belongs to the phosphopentomutase family. Mn(2+) is required as a cofactor.

It localises to the cytoplasm. It catalyses the reaction 2-deoxy-alpha-D-ribose 1-phosphate = 2-deoxy-D-ribose 5-phosphate. The enzyme catalyses alpha-D-ribose 1-phosphate = D-ribose 5-phosphate. Its pathway is carbohydrate degradation; 2-deoxy-D-ribose 1-phosphate degradation; D-glyceraldehyde 3-phosphate and acetaldehyde from 2-deoxy-alpha-D-ribose 1-phosphate: step 1/2. Isomerase that catalyzes the conversion of deoxy-ribose 1-phosphate (dRib-1-P) and ribose 1-phosphate (Rib-1-P) to deoxy-ribose 5-phosphate (dRib-5-P) and ribose 5-phosphate (Rib-5-P), respectively. The polypeptide is Phosphopentomutase (Photobacterium profundum (strain SS9)).